Consider the following 136-residue polypeptide: Large ribosomal subunit protein bL17 (136 aa).

Belongs to the bacterial ribosomal protein bL17 family. Part of the 50S ribosomal subunit. Contacts protein L32.

The chain is Large ribosomal subunit protein bL17 from Akkermansia muciniphila (strain ATCC BAA-835 / DSM 22959 / JCM 33894 / BCRC 81048 / CCUG 64013 / CIP 107961 / Muc).